The primary structure comprises 214 residues: Thymidylate kinase (214 aa).

Glycine 14–threonine 21 provides a ligand contact to ATP.

It belongs to the thymidylate kinase family.

It carries out the reaction dTMP + ATP = dTDP + ADP. In terms of biological role, phosphorylation of dTMP to form dTDP in both de novo and salvage pathways of dTTP synthesis. The polypeptide is Thymidylate kinase (Mannheimia succiniciproducens (strain KCTC 0769BP / MBEL55E)).